We begin with the raw amino-acid sequence, 175 residues long: Putative metal-dependent hydrolase BPUM_0784 (175 aa).

Zn(2+) contacts are provided by H65, H157, and H161.

It belongs to the metal hydrolase YfiT family. Homodimer. Zn(2+) is required as a cofactor.

Its subcellular location is the cytoplasm. Its function is as follows. Possible metal-dependent hydrolase. The polypeptide is Putative metal-dependent hydrolase BPUM_0784 (Bacillus pumilus (strain SAFR-032)).